We begin with the raw amino-acid sequence, 578 residues long: Potassium-transporting ATPase potassium-binding subunit (578 aa).

11 consecutive transmembrane segments (helical) span residues 3–23 (AAAL…AVPL), 67–87 (AAAA…LERL), 95–115 (PAGL…SFAT), 136–156 (ALTV…AALV), 181–201 (LLLP…VPQT), 264–284 (LEAL…GALV), 291–311 (WTVY…TVSA), 396–416 (GLYG…LMVG), 436–456 (LAIL…CLLP), 504–524 (VAML…AGAF), and 543–563 (LFAG…FLPA).

This sequence belongs to the KdpA family. As to quaternary structure, the system is composed of three essential subunits: KdpA, KdpB and KdpC.

Its subcellular location is the cell inner membrane. In terms of biological role, part of the high-affinity ATP-driven potassium transport (or Kdp) system, which catalyzes the hydrolysis of ATP coupled with the electrogenic transport of potassium into the cytoplasm. This subunit binds the periplasmic potassium ions and delivers the ions to the membrane domain of KdpB through an intramembrane tunnel. This chain is Potassium-transporting ATPase potassium-binding subunit, found in Anaeromyxobacter dehalogenans (strain 2CP-C).